The sequence spans 249 residues: ATP synthase subunit a, chloroplastic (249 aa).

Helical transmembrane passes span 40-60 (QVLI…VLAI), 97-117 (VPFI…GALL), 136-156 (INTT…AGLS), 201-221 (LVVV…VMFL), and 222-242 (GLFT…AYIG).

The protein belongs to the ATPase A chain family. F-type ATPases have 2 components, CF(1) - the catalytic core - and CF(0) - the membrane proton channel. CF(1) has five subunits: alpha(3), beta(3), gamma(1), delta(1), epsilon(1). CF(0) has four main subunits: a, b, b' and c.

The protein localises to the plastid. It is found in the chloroplast thylakoid membrane. Functionally, key component of the proton channel; it plays a direct role in the translocation of protons across the membrane. This chain is ATP synthase subunit a, chloroplastic, found in Lepidium virginicum (Virginia pepperweed).